The chain runs to 373 residues: XK-related protein 9 (373 aa).

The next 8 membrane-spanning stretches (helical) occupy residues 8–28 (FMMS…DIWV), 38–58 (YVFS…AQCF), 166–186 (AAIM…QVAL), 203–223 (ITYL…VVLL), 224–244 (LFLN…LGII), 256–276 (CISM…FTFF), 295–315 (VLGT…IFNP), and 318–338 (FIPI…FLIV).

It belongs to the XK family. Undergoes proteolytic processing by caspase-3 (CASP3), caspase-6 (CASP6) and caspase-7 (CASP7) to generate the XK-related protein 9, processed form, leading to its activation.

The protein localises to the cell membrane. The catalysed reaction is a 1,2-diacyl-sn-glycero-3-phospho-L-serine(in) = a 1,2-diacyl-sn-glycero-3-phospho-L-serine(out). Its activity is regulated as follows. Activated upon caspase cleavage to generate the XK-related protein 9, processed form. Does not act prior the onset of apoptosis. Phospholipid scramblase that promotes phosphatidylserine exposure on apoptotic cell surface. Phosphatidylserine is a specific marker only present at the surface of apoptotic cells and acts as a specific signal for engulfment. The polypeptide is XK-related protein 9 (Pan troglodytes (Chimpanzee)).